We begin with the raw amino-acid sequence, 424 residues long: Adenosylmethionine-8-amino-7-oxononanoate aminotransferase (424 aa).

Trp-46 lines the substrate pocket. 106–107 provides a ligand contact to pyridoxal 5'-phosphate; that stretch reads GS. Tyr-138 is a substrate binding site. Asp-240 contacts pyridoxal 5'-phosphate. Substrate-binding residues include Lys-269 and Gly-303. N6-(pyridoxal phosphate)lysine is present on Lys-269. 304–305 serves as a coordination point for pyridoxal 5'-phosphate; sequence HS. Arg-391 contributes to the substrate binding site.

It belongs to the class-III pyridoxal-phosphate-dependent aminotransferase family. BioA subfamily. In terms of assembly, homodimer. Pyridoxal 5'-phosphate is required as a cofactor.

It localises to the cytoplasm. It carries out the reaction (8S)-8-amino-7-oxononanoate + S-adenosyl-L-methionine = S-adenosyl-4-methylsulfanyl-2-oxobutanoate + (7R,8S)-7,8-diammoniononanoate. It participates in cofactor biosynthesis; biotin biosynthesis; 7,8-diaminononanoate from 8-amino-7-oxononanoate (SAM route): step 1/1. Functionally, catalyzes the transfer of the alpha-amino group from S-adenosyl-L-methionine (SAM) to 7-keto-8-aminopelargonic acid (KAPA) to form 7,8-diaminopelargonic acid (DAPA). It is the only aminotransferase known to utilize SAM as an amino donor. Complements a bioU deletion in Synechocystis PCC 6803. The chain is Adenosylmethionine-8-amino-7-oxononanoate aminotransferase from Synechococcus elongatus (strain ATCC 33912 / PCC 7942 / FACHB-805) (Anacystis nidulans R2).